The following is a 116-amino-acid chain: Protein Rev (116 aa).

2 positions are modified to phosphoserine; by host CK2: Ser5 and Ser8. The tract at residues 18 to 26 (LIKFLYQSN) is homomultimerization. The tract at residues 23–49 (YQSNPPPNPEGTRQARRNRRRRWRERQ) is disordered. Positions 34–50 (TRQARRNRRRRWRERQR) match the Nuclear localization signal and RNA-binding (RRE) motif. Positions 36 to 47 (QARRNRRRRWRE) are enriched in basic residues. The Nuclear export signal and binding to XPO1 signature appears at 73–84 (LQLPPLERLTLD). Phosphoserine; by host occurs at positions 92 and 99.

This sequence belongs to the HIV-1 REV protein family. As to quaternary structure, homomultimer; when bound to the RRE. Multimeric assembly is essential for activity and may involve XPO1. Binds to human KPNB1, XPO1, TNPO1, RANBP5 and IPO7. Interacts with the viral Integrase. Interacts with human KHDRBS1. Interacts with human NAP1; this interaction decreases Rev multimerization and stimulates its activity. Interacts with human DEAD-box helicases DDX3 and DDX24; these interactions may serve for viral RNA export to the cytoplasm and packaging, respectively. Interacts with human PSIP1; this interaction may inhibit HIV-1 DNA integration by promoting dissociation of the Integrase-LEDGF/p75 complex. In terms of processing, asymmetrically arginine dimethylated at one site by host PRMT6. Methylation impairs the RNA-binding activity and export of viral RNA from the nucleus to the cytoplasm. Post-translationally, phosphorylated by protein kinase CK2. Presence of, and maybe binding to the N-terminus of the regulatory beta subunit of CK2 is necessary for CK2-mediated Rev's phosphorylation.

The protein resides in the host nucleus. It is found in the host nucleolus. Its subcellular location is the host cytoplasm. Functionally, escorts unspliced or incompletely spliced viral pre-mRNAs (late transcripts) out of the nucleus of infected cells. These pre-mRNAs carry a recognition sequence called Rev responsive element (RRE) located in the env gene, that is not present in fully spliced viral mRNAs (early transcripts). This function is essential since most viral proteins are translated from unspliced or partially spliced pre-mRNAs which cannot exit the nucleus by the pathway used by fully processed cellular mRNAs. Rev itself is translated from a fully spliced mRNA that readily exits the nucleus. Rev's nuclear localization signal (NLS) binds directly to KPNB1/Importin beta-1 without previous binding to KPNA1/Importin alpha-1. KPNB1 binds to the GDP bound form of RAN (Ran-GDP) and targets Rev to the nucleus. In the nucleus, the conversion from Ran-GDP to Ran-GTP dissociates Rev from KPNB1 and allows Rev's binding to the RRE in viral pre-mRNAs. Rev multimerization on the RRE via cooperative assembly exposes its nuclear export signal (NES) to the surface. Rev can then form a complex with XPO1/CRM1 and Ran-GTP, leading to nuclear export of the complex. Conversion from Ran-GTP to Ran-GDP mediates dissociation of the Rev/RRE/XPO1/RAN complex, so that Rev can return to the nucleus for a subsequent round of export. Beside KPNB1, also seems to interact with TNPO1/Transportin-1, RANBP5/IPO5 and IPO7/RANBP7 for nuclear import. The nucleoporin-like HRB/RIP is an essential cofactor that probably indirectly interacts with Rev to release HIV RNAs from the perinuclear region to the cytoplasm. The chain is Protein Rev from Human immunodeficiency virus type 1 group M subtype B (isolate PCV12) (HIV-1).